Consider the following 488-residue polypeptide: 3-octaprenyl-4-hydroxybenzoate carboxy-lyase (488 aa).

Asparagine 172 contributes to the Mn(2+) binding site. Residues 175 to 177, 189 to 191, and 194 to 195 each bind prenylated FMN; these read IYR, RWL, and RG. Glutamate 238 provides a ligand contact to Mn(2+). Aspartate 287 functions as the Proton donor in the catalytic mechanism.

This sequence belongs to the UbiD family. Homohexamer. Prenylated FMN is required as a cofactor. Mn(2+) serves as cofactor.

The protein resides in the cell membrane. It carries out the reaction a 4-hydroxy-3-(all-trans-polyprenyl)benzoate + H(+) = a 2-(all-trans-polyprenyl)phenol + CO2. Its pathway is cofactor biosynthesis; ubiquinone biosynthesis. Its function is as follows. Catalyzes the decarboxylation of 3-octaprenyl-4-hydroxy benzoate to 2-octaprenylphenol, an intermediate step in ubiquinone biosynthesis. The chain is 3-octaprenyl-4-hydroxybenzoate carboxy-lyase from Pseudomonas fluorescens (strain ATCC BAA-477 / NRRL B-23932 / Pf-5).